The sequence spans 88 residues: Small ribosomal subunit protein bS20 (88 aa).

Over residues 1–17 (MANIKSNEKRLRQDIKR) the composition is skewed to basic and acidic residues. The interval 1–25 (MANIKSNEKRLRQDIKRNLNNKGQK) is disordered.

This sequence belongs to the bacterial ribosomal protein bS20 family.

In terms of biological role, binds directly to 16S ribosomal RNA. This Mycoplasma genitalium (strain ATCC 33530 / DSM 19775 / NCTC 10195 / G37) (Mycoplasmoides genitalium) protein is Small ribosomal subunit protein bS20.